We begin with the raw amino-acid sequence, 122 residues long: Large ribosomal subunit protein uL14 (122 aa).

It belongs to the universal ribosomal protein uL14 family. As to quaternary structure, part of the 50S ribosomal subunit. Forms a cluster with proteins L3 and L19. In the 70S ribosome, L14 and L19 interact and together make contacts with the 16S rRNA in bridges B5 and B8.

Binds to 23S rRNA. Forms part of two intersubunit bridges in the 70S ribosome. In Streptomyces coelicolor (strain ATCC BAA-471 / A3(2) / M145), this protein is Large ribosomal subunit protein uL14.